Here is a 139-residue protein sequence, read N- to C-terminus: MPQPKPSEQEGESMKASQEPAPQPGTDVVPAAPRKPRKFSKLVLLTASKDSAKVAGAKRKGVHCIMSLGVPGPATLAKALLKTHPEAQRAIEATPLEPEQKRSKQNLDSDGPEDNGGSGVSSSSSEETTVLPEAPSTSP.

Disordered stretches follow at residues 1-36 (MPQP…PRKP) and 86-139 (EAQR…STSP). A compositionally biased stretch (basic and acidic residues) spans 98–107 (PEQKRSKQNL). A compositionally biased stretch (low complexity) spans 120-130 (VSSSSSEETTV).

This is FLYWCH family member 2 (Flywch2) from Mus musculus (Mouse).